The chain runs to 256 residues: Galactitol 2-dehydrogenase (256 aa).

NAD(+)-binding positions include 15–17, D36, 59–60, N86, Y152, and K156; these read RGI and DV. Y152 functions as the Proton acceptor in the catalytic mechanism.

It belongs to the short-chain dehydrogenases/reductases (SDR) family.

It carries out the reaction galactitol + NAD(+) = keto-D-tagatose + NADH + H(+). The enzyme catalyses keto-D-fructose + NADH + H(+) = D-sorbitol + NAD(+). Its pathway is carbohydrate metabolism. In terms of biological role, involved in galactitol catabolism. Catalyzes the oxidation of galactitol to D-tagatose. Can also catalyze the oxidation of D-sorbitol to D-fructose. In Agrobacterium fabrum (strain C58 / ATCC 33970) (Agrobacterium tumefaciens (strain C58)), this protein is Galactitol 2-dehydrogenase.